We begin with the raw amino-acid sequence, 252 residues long: CLAVATA3/ESR (CLE)-related protein 4A-1 (252 aa).

The N-terminal stretch at 1–21 is a signal peptide; that stretch reads MAKNAMLCLLILRVVLALAFA. The segment at 21–83 is required for secretion from the host cytoplasm to the host apoplasm; sequence ATNKKGDEEP…SNQLPNNNWM (63 aa). N-linked (GlcNAc...) asparagine glycosylation occurs at asparagine 32. Residues 116 to 252 form a disordered region; sequence RKTGMHSQRH…APAGPDPIHH (137 aa). 2 stretches are compositionally biased toward basic and acidic residues: residues 125 to 137 and 144 to 242; these read HHEE…EKRV and PIHH…EKRG. The A-1 repeat unit spans residues 127 to 135; the sequence is EETTLEQEK. The tract at residues 127 to 219 is 6 X approximate repeat A; the sequence is EETTLEQEKR…HEETTLEQEK (93 aa). One copy of the CLE-1 repeat lies at 136 to 147; it reads RVAGAGPDPIHH. Positions 136-252 are 6 X approximate repeat CLE; that stretch reads RVAGAGPDPI…APAGPDPIHH (117 aa). One copy of the A-2 repeat lies at 148 to 156; sequence QDTTLEQEK. The stretch at 157–168 is one CLE-2 repeat; sequence RAVPAGPDPKHH. The stretch at 169–177 is one A-3 repeat; sequence EETTLEQEK. One copy of the CLE-3 repeat lies at 178 to 189; that stretch reads RAVPAGPDPKHH. One copy of the A-4 repeat lies at 190 to 198; sequence EETTLEQEK. The stretch at 199–210 is one CLE-4 repeat; the sequence is RAVPAGPDPKHH. The A-5 repeat unit spans residues 211–219; sequence EETTLEQEK. The CLE-5 repeat unit spans residues 220 to 231; it reads RAVPAGPDPKHH. Residues 232–240 form an A-6 repeat; sequence EETTFEQEK. A CLE-6 repeat occupies 241–252; sequence RGAPAGPDPIHH.

Belongs to the CLV3/ESR signal peptide family. In terms of tissue distribution, highly expressed exclusively within the dorsal esophageal gland cell during syncytium formation in host plants.

It localises to the secreted. The protein resides in the host cytoplasm. The protein localises to the host extracellular space. It is found in the extracellular space. Its subcellular location is the apoplast. In terms of biological role, mimics host plant CLE extracellular signal peptides that regulate cell fate. May play a role in the differentiation or division of feeding cells (syncytia) induced in plant roots during infection. This is CLAVATA3/ESR (CLE)-related protein 4A-1 (CLE-4A-1) from Globodera rostochiensis (Golden nematode worm).